Reading from the N-terminus, the 426-residue chain is SrfA-induced gene K protein (426 aa).

The signal sequence occupies residues 1-23 (MKKMKILSFFILSLAIIIGIVYS). Asparagine 64, asparagine 136, asparagine 160, and asparagine 226 each carry an N-linked (GlcNAc...) asparagine glycan. Laminin EGF-like domains follow at residues 325–348 (DNQC…GMVL) and 384–408 (CNGT…GGEV). 3 disulfides stabilise this stretch: cysteine 330–cysteine 339, cysteine 342–cysteine 358, and cysteine 370–cysteine 388. A glycan (N-linked (GlcNAc...) asparagine) is linked at asparagine 385.

The chain is SrfA-induced gene K protein (sigK) from Dictyostelium discoideum (Social amoeba).